Reading from the N-terminus, the 939-residue chain is MKDYYTWTYPDVPENVAQELLQLENSMVVVGIVGRSKCERANKMQAFGMSPPMEHTPADGQVQCYYKRGTSCIFLHFETTYDEPILHRMIEDSMADHQNAFDFDHFYEQMRSRFVRMMLLALHTCHIIVYVETGPTFDPTLVTVFQLLKFSREQHLKQFLPQMLRDTPAAKLGEKSRLCAPRILFLFENFPSDELKTRENVSAYEFQTEDNIYEMLRHHHIFTNSSPSSLVALPNNKQFVYFNAHEELHPDYLLKAIDCLNKTMFKPDMREEEEDLEILELAPFEGFCKPFGPPGERDVEAQQYKRQHTAWHFLQRHIQDALHGCFDEGSFKQLPHLGQFQLLSFPEWQGCMDTLTQLLVENAKDTNFETNNEEYKNFLLNFEDSLNYEKKFWAHLCELGLKKGISSYKSSAPANYGSATHRKLLAEATIAFEEEGRGPPAQAALARMAAICLKHWQDGRQQCEKLSLRSQPCTLPKDVPHDKHNSGVIHISSCNCGRTQGRREDPFNLRQANYDFYELIAQICNLCVKVKQYQFPIFEPSVSDYRAAAFDAAFPMLNTGKICTPQGEDENEDGETEEADEDTEEKEQAEGDNCSQQLSPTFGSDLNMSIAGFGASLNESQESSEQLSGSEHESPNSGTSSADTENELVLQIKEPARKESTPTGGFSTSTTEYLPGLVHTVSDFGLLPLFPSWSLACVGPSSIYSHNTGLQEHFQSGFLSGANFLLPWDVLLRLVHANKHHQQHHHNMHLQQHPGKKQQRWKKQGDRLSIKIFVGMEYECSRGHRFMMCAPDRVLRGGADIERDTCNKVVHSNMPLYYPCPCRSQSNYLAQLMRIHVVTPKAPVNIIVDPKVCVGKYTFTLGTIIPPRLSQSAYWILRLPFVYQGDNVMIAPPEKLDPDNPMAGGYLLPGMFGVAETDANMDLSNPSRMGSTAGTFIRI.

2 disordered regions span residues 561-600 and 617-645; these read KICT…QLSP and LNES…ADTE. A compositionally biased stretch (acidic residues) spans 567–587; it reads GEDENEDGETEEADEDTEEKE. The span at 617-629 shows a compositional bias: low complexity; it reads LNESQESSEQLSG.

The protein belongs to the SMG8 family.

In terms of biological role, involved in nonsense-mediated decay (NMD) of mRNAs containing premature stop codons. Probable component of kinase complex containing nonC and recruited to stalled ribosomes. The protein is Nonsense-mediated mRNA decay factor SMG8 of Drosophila ananassae (Fruit fly).